Consider the following 89-residue polypeptide: Small ribosomal subunit protein uS14 (89 aa).

It belongs to the universal ribosomal protein uS14 family. As to quaternary structure, part of the 30S ribosomal subunit. Contacts proteins S3 and S10.

Binds 16S rRNA, required for the assembly of 30S particles and may also be responsible for determining the conformation of the 16S rRNA at the A site. This chain is Small ribosomal subunit protein uS14, found in Streptococcus pneumoniae serotype 2 (strain D39 / NCTC 7466).